We begin with the raw amino-acid sequence, 224 residues long: Peroxiredoxin-6 (224 aa).

Residues 5–169 (LLLGDEAPNF…ILRVVDSLQL (165 aa)) enclose the Thioredoxin domain. Positions 31–40 (DSWGILFSHP) are required and sufficient for targeting to lysosomes and lamellar bodies. Thr-44 is subject to Phosphothreonine. The active-site Cysteine sulfenic acid (-SOH) intermediate; for peroxidase activity is the Cys-47. Residue Lys-63 is modified to N6-acetyllysine. Tyr-89 is subject to Phosphotyrosine. Thr-93 is modified (phosphothreonine). Asp-140 functions as the For phospholipase activity in the catalytic mechanism. Thr-177 is subject to Phosphothreonine; by MAPK. Lys-209 bears the N6-acetyllysine; alternate mark. An N6-succinyllysine; alternate modification is found at Lys-209.

The protein belongs to the peroxiredoxin family. Prx6 subfamily. Homodimer. Interacts with GSTP1; mediates PRDX6 glutathionylation and regeneration. Interacts with APEX1. Interacts with STH. May interact with FAM168B. May interact with HTR2A. Irreversibly inactivated by overoxidation of Cys-47 to sulfinic acid (Cys-SO(2)H) and sulfonic acid (Cys-SO(3)H) forms upon oxidative stress. In terms of processing, phosphorylation at Thr-177 by MAP kinases increases the phospholipase activity of the enzyme. The phosphorylated form exhibits a greater lysophosphatidylcholine acyltransferase activity compared to the non-phosphorylated form. As to expression, highly expressed in heart, kidney and liver. Moderate expression in brain and stomach. Very low levels in intestine.

The protein resides in the cytoplasm. The protein localises to the lysosome. The enzyme catalyses a hydroperoxide + 2 glutathione = an alcohol + glutathione disulfide + H2O. It catalyses the reaction a 1,2-diacyl-sn-glycero-3-phosphocholine + H2O = a 1-acyl-sn-glycero-3-phosphocholine + a fatty acid + H(+). It carries out the reaction a 1-acyl-sn-glycero-3-phosphocholine + an acyl-CoA = a 1,2-diacyl-sn-glycero-3-phosphocholine + CoA. The catalysed reaction is 1-hexadecanoyl-sn-glycero-3-phosphocholine + hexadecanoyl-CoA = 1,2-dihexadecanoyl-sn-glycero-3-phosphocholine + CoA. The enzyme catalyses 1,2-dihexadecanoyl-sn-glycero-3-phosphocholine + H2O = 1-hexadecanoyl-sn-glycero-3-phosphocholine + hexadecanoate + H(+). With respect to regulation, MJ33 or lithium;[(2R)-1-hexadecoxy-3-(2,2,2-trifluoroethoxy)propan-2-yl] methyl phosphate inhibits its phospholipase A2 activity. CI-976 or 2,2-Dimethyl-N-(2,4,6-trimethoxyphenyl)dodecanamide inhibits its lysophosphatidylcholine acyltransferase activity. Functionally, thiol-specific peroxidase that catalyzes the reduction of hydrogen peroxide and organic hydroperoxides to water and alcohols, respectively. Can reduce H(2)O(2) and short chain organic, fatty acid, and phospholipid hydroperoxides. Has phospholipase activity. Can either reduce the oxidized sn-2 fatty acyl group of phospholipids (peroxidase activity) or hydrolyze the sn-2 ester bond of phospholipids (phospholipase activity). These activities are dependent on binding to phospholipids at acidic pH and to oxidized phospholipds at cytosolic pH. Plays a role in cell protection against oxidative stress by detoxifying peroxides and in phospholipid homeostasis. Exhibits acyl-CoA-dependent lysophospholipid acyltransferase which mediates the conversion of lysophosphatidylcholine (1-acyl-sn-glycero-3-phosphocholine or LPC) into phosphatidylcholine (1,2-diacyl-sn-glycero-3-phosphocholine or PC). Shows a clear preference for LPC as the lysophospholipid and for palmitoyl CoA as the fatty acyl substrate. In Mus musculus (Mouse), this protein is Peroxiredoxin-6 (Prdx6).